Consider the following 350-residue polypeptide: MFCCLGYEWLSGGCKTWHSAWVINTLADHRHRGTDFGGSPWLLIITVFLRSYKFAISLCTSYLCVSFLKTIFPSQNGHDGSTDVQQRARRSNRRRQEGIKIVLEDIFTLWRQVETKVRAKICKMKVTTKVNRHDKINGKRKTAKEHLRKLSMKEREHGEKERQVSEAEENGKLDMKEIHTYMEMFQRAQALRRRAEDYYRCKITPSARKPLCNRVRMAAAEHRHSSGLPYWPYLTAETLKNRMGHQPPPPTQQHSIIDNSLSLKTPPECLLTPLPPSALPSADDNLKTPAECLLYPLPPSADDNLKTPPECLLTPLPPSAPPSVDDNLKTPPKCVCSLPFHPQRMIISRN.

Residues 306-325 (KTPPECLLTPLPPSAPPSVD) are disordered.

It belongs to the NPIP family.

The chain is Nuclear pore complex-interacting protein family member A3 (NPIPA3) from Homo sapiens (Human).